An 810-amino-acid polypeptide reads, in one-letter code: Lon protease (810 aa).

The Lon N-terminal domain occupies 32-226 (LPAIAMRSNM…RILDILARET (195 aa)). 376–383 (GPPGVGKT) provides a ligand contact to ATP. Positions 612 to 791 (KPMIGVTTGL…EEVLEVALNE (180 aa)) constitute a Lon proteolytic domain. Catalysis depends on residues S697 and K740.

The protein belongs to the peptidase S16 family. Homohexamer. Organized in a ring with a central cavity.

The protein localises to the cytoplasm. The enzyme catalyses Hydrolysis of proteins in presence of ATP.. Functionally, ATP-dependent serine protease that mediates the selective degradation of mutant and abnormal proteins as well as certain short-lived regulatory proteins. Required for cellular homeostasis and for survival from DNA damage and developmental changes induced by stress. Degrades polypeptides processively to yield small peptide fragments that are 5 to 10 amino acids long. Binds to DNA in a double-stranded, site-specific manner. The protein is Lon protease of Fervidobacterium nodosum (strain ATCC 35602 / DSM 5306 / Rt17-B1).